We begin with the raw amino-acid sequence, 147 residues long: Interleukin-4 (147 aa).

An N-terminal signal peptide occupies residues 1-24 (MGLSPHLAVTLFCFLICTGNGIHG). Cys47 and Cys87 form a disulfide bridge. N-linked (GlcNAc...) asparagine glycosylation is found at Asn61, Asn90, and Asn117.

It belongs to the IL-4/IL-13 family.

It is found in the secreted. In terms of biological role, participates in at least several B-cell activation processes as well as of other cell types. It is a costimulator of DNA-synthesis. It induces the expression of class II MHC molecules on resting B-cells. It enhances both secretion and cell surface expression of IgE and IgG1. It also regulates the expression of the low affinity Fc receptor for IgE (CD23) on both lymphocytes and monocytes. Positively regulates IL31RA expression in macrophages. Stimulates autophagy in dendritic cells by interfering with mTORC1 signaling and through the induction of RUFY4. In Rattus norvegicus (Rat), this protein is Interleukin-4 (Il4).